A 269-amino-acid chain; its full sequence is Tryptophan synthase alpha chain (269 aa).

Catalysis depends on proton acceptor residues E49 and D60.

It belongs to the TrpA family. Tetramer of two alpha and two beta chains.

It catalyses the reaction (1S,2R)-1-C-(indol-3-yl)glycerol 3-phosphate + L-serine = D-glyceraldehyde 3-phosphate + L-tryptophan + H2O. It functions in the pathway amino-acid biosynthesis; L-tryptophan biosynthesis; L-tryptophan from chorismate: step 5/5. The alpha subunit is responsible for the aldol cleavage of indoleglycerol phosphate to indole and glyceraldehyde 3-phosphate. In Enterobacter sp. (strain 638), this protein is Tryptophan synthase alpha chain.